Consider the following 504-residue polypeptide: Pre-mRNA-processing factor 19 (504 aa).

At Ser-2 the chain carries N-acetylserine. The region spanning 2-73 is the U-box domain; the sequence is SLICSISNEV…KPPSATSIPA (72 aa). Residues 68–223 form a may mediate interaction with PSMC5 region; the sequence is ATSIPAILKA…VGLHSASIPG (156 aa). Lys-122, Lys-179, Lys-244, and Lys-261 each carry N6-acetyllysine. A WD 1 repeat occupies 219–259; it reads ASIPGILALDLCPSDTNKILTGGADKNVVVFDKSTEQILAT. WD repeat units follow at residues 262-301, 304-345, 348-387, 390-429, 433-472, and 473-503; these read GHTK…CVQV, AHES…TKVT, TSGC…NVAN, GHSG…NFKT, DNNF…LHFT, and EHSG…KFYS.

Belongs to the WD repeat PRP19 family. Homotetramer. Component of activated, catalytic and post-catalytic spliceosomes. Component of the Prp19 complex/PRP19C/Nineteen complex/NTC and related complexes described as PRP19-CDC5L splicing complex and PSO4 complex. A homotetramer of PRPF19, CDC5L, PLRG1 and BCAS2 constitute the core of those complexes. The interaction with CDC5L, PLRG1 and BCAS2 is direct within this core complex. At least three less stably associated proteins CTNNBL1, CWC15 and HSPA8 are found in the Prp19 complex. The Prp19 complex associates with the spliceosome during its assembly and remodeling recruiting additional proteins. Component of the XAB2 complex, a multimeric protein complex composed of XAB2, PRPF19, AQR, ZNF830, ISY1, and PPIE. Interacts with CWC22 and EIF4A3 in an RNA-independent manner. Interacts with RPA1 and RPA2; the PRP19-CDC5L complex is recruited to the sites of DNA repair where it interacts with the replication protein A complex (RPA). Interacts with SETMAR; required for SETMAR recruitment to site of DNA damage. Interacts with U2AF2; the interaction is direct and recruits the Prp19 complex to RNA polymerase II C-terminal domain (CTD) and the pre-mRNA. Interacts with PRPF3. Interacts with APEX1, DNTT and PSMB4. Interacts with KNSTRN. Interacts with PSMC5. Isoform 2 (via N-terminus) interacts with PPIA. Isoform 2 does not interact with CDC5L. Interacts with KHDC4. Interacts with USB1. Interacts with DDX41. As to expression, expressed in white and brown adipose tissues, brain and to a lower extent in liver, kidney, muscle, lung and spleen (at protein level).

It localises to the nucleus. The protein resides in the nucleoplasm. The protein localises to the cytoplasm. It is found in the cytoskeleton. Its subcellular location is the spindle. It localises to the lipid droplet. The enzyme catalyses S-ubiquitinyl-[E2 ubiquitin-conjugating enzyme]-L-cysteine + [acceptor protein]-L-lysine = [E2 ubiquitin-conjugating enzyme]-L-cysteine + N(6)-ubiquitinyl-[acceptor protein]-L-lysine.. Its pathway is protein modification; protein ubiquitination. Its function is as follows. Ubiquitin-protein ligase which is a core component of several complexes mainly involved in pre-mRNA splicing and DNA repair. Required for pre-mRNA splicing as component of the spliceosome. Core component of the PRP19C/Prp19 complex/NTC/Nineteen complex which is part of the spliceosome and participates in its assembly, its remodeling and is required for its activity. During assembly of the spliceosome, mediates 'Lys-63'-linked polyubiquitination of the U4 spliceosomal protein PRPF3. Ubiquitination of PRPF3 allows its recognition by the U5 component PRPF8 and stabilizes the U4/U5/U6 tri-snRNP spliceosomal complex. Recruited to RNA polymerase II C-terminal domain (CTD) and the pre-mRNA, it may also couple the transcriptional and spliceosomal machineries. The XAB2 complex, which contains PRPF19, is also involved in pre-mRNA splicing, transcription and transcription-coupled repair. Beside its role in pre-mRNA splicing PRPF19, as part of the PRP19-CDC5L complex, plays a role in the DNA damage response/DDR. It is recruited to the sites of DNA damage by the RPA complex where PRPF19 directly ubiquitinates RPA1 and RPA2. 'Lys-63'-linked polyubiquitination of the RPA complex allows the recruitment of the ATR-ATRIP complex and the activation of ATR, a master regulator of the DNA damage response. May also play a role in DNA double-strand break (DSB) repair by recruiting the repair factor SETMAR to altered DNA. As part of the PSO4 complex may also be involved in the DNA interstrand cross-links/ICLs repair process. In addition, may also mediate 'Lys-48'-linked polyubiquitination of substrates and play a role in proteasomal degradation. May play a role in the biogenesis of lipid droplets. May play a role in neural differentiation possibly through its function as part of the spliceosome. Functionally, forced expression leads to suppression of neuronal differentiation, and on the contrary to stimulation of astroglial cell differentiation in retinoic acid-primed P19 cells. The polypeptide is Pre-mRNA-processing factor 19 (Mus musculus (Mouse)).